The primary structure comprises 2521 residues: Partially reducing polyketide synthase tpeA (2521 aa).

Residues 7–434 (DQSIAVIGLS…GSNAHAIIDN (428 aa)) enclose the Ketosynthase family 3 (KS3) domain. Residues 47–66 (RWNSRRFQDDKNHSQNTSRT) form a disordered region. Active-site for beta-ketoacyl synthase activity residues include cysteine 180, histidine 315, and histidine 357. The region spanning 554-855 (YVFTGQGAQW…LRGPVTQILQ (302 aa)) is the Malonyl-CoA:ACP transacylase (MAT) domain. Residues 948–1088 (SSFIGLPMPS…GLVTVEFEQL (141 aa)) are N-terminal hotdog fold. Positions 948–1258 (SSFIGLPMPS…CVEMPSTAGV (311 aa)) constitute a PKS/mFAS DH domain. Positions 949–1256 (SFIGLPMPSF…LTCVEMPSTA (308 aa)) are dehydratase (DH) domain. Positions 1100 to 1258 (TTVQQAEAFY…CVEMPSTAGV (159 aa)) are C-terminal hotdog fold. One can recognise an Enoyl reductase (ER) domain in the interval 1809-2121 (GMLNTLCFQA…DNRHHGKITL (313 aa)). Residues 2146–2323 (TYLIAGGLGG…AVTIDLGIVK (178 aa)) enclose the Ketoreductase (KR) domain. Residues 2433-2510 (DAVLFVTGAV…SFARDLVGKG (78 aa)) enclose the Carrier domain. O-(pantetheine 4'-phosphoryl)serine is present on serine 2470.

Requires pantetheine 4'-phosphate as cofactor.

It participates in secondary metabolite biosynthesis. Its function is as follows. Partially reducing polyketide synthase; part of the gene cluster that mediates the biosynthesis of polyesters containing 2,4-dihydroxy-6-(2-hydroxypropyl)benzoate and 3-hydroxybutyrate moieties, such as talapolyester G, 15G256beta and 15G256beta-2; as well as to oxidized derivatives such as 15G256alpha. The biosynthesis of the polyesters probably starts with the formation of the diketide 3-hydroxybutyryl-S-ACP catalyzed by the partially reducing polyketide synthase tpeA. The acceptance of 3-hydroxybutyryl by the non-reducing polyketide synthase tpeB would initiate further elongation and cyclization, catalyzed by KS and PT, respectively, to form 2,4-dihydroxy-6-(2-hydroxyn-propyl)benzoyl-S-ACP intermediate. The TE domain could catalyze lactonization at this step to yield 6-hydroxymellein as a derailment product. The polyesterification process maybe occurs when additional molecules of 3-hydroxybutyryl are transferred to tpeB. Following the first esterification step, an intramolecular cyclization catalyzed by the TE domain of tpeB would give talarodioxadione 1, whereas the ethyl esterification of talapolyester G perhaps happens spontaneously. Further oxidation by the cytochrome P450 monooxygenase tpeC then leads to the formation of oxidized derivatives. The chain is Partially reducing polyketide synthase tpeA from Talaromyces stipitatus (strain ATCC 10500 / CBS 375.48 / QM 6759 / NRRL 1006) (Penicillium stipitatum).